The chain runs to 2400 residues: Retinitis pigmentosa 1-like 1 protein (2400 aa).

Doublecortin domains lie at lysine 34–arginine 118 and arginine 152–lysine 231. Disordered stretches follow at residues cysteine 104–arginine 152, methionine 230–lysine 310, glycine 444–alanine 1064, alanine 1188–glutamate 1251, glutamate 1275–glutamate 1501, and arginine 1697–phenylalanine 2400. Positions serine 242 to glycine 251 are enriched in polar residues. The segment covering arginine 277–proline 287 has biased composition (pro residues). Positions glutamine 450 to glycine 460 are enriched in polar residues. 2 stretches are compositionally biased toward low complexity: residues glycine 530 to glutamate 543 and aspartate 573 to leucine 584. A compositionally biased stretch (polar residues) spans alanine 591–alanine 601. Composition is skewed to low complexity over residues serine 625–glycine 637 and alanine 645–proline 654. A compositionally biased stretch (basic residues) spans proline 661–tyrosine 670. Composition is skewed to polar residues over residues threonine 711 to valine 740 and cysteine 825 to glutamine 835. Composition is skewed to low complexity over residues glutamine 864–threonine 880, proline 903–glycine 921, and serine 941–proline 953. Composition is skewed to polar residues over residues leucine 1223–arginine 1238 and alanine 1285–glutamate 1299. The 1-1; approximate repeat unit spans residues leucine 1292 to lysine 1307. Residues leucine 1292–lysine 1342 form a 3 X 16 AA approximate tandem repeats of T-E-E-G-L-Q-E-E-G-V-Q-L-E-E-T-K region. One copy of the 1-2; approximate repeat lies at threonine 1310–lysine 1326. The 1-3 repeat unit spans residues threonine 1327–lysine 1342. The span at glycine 1346–glycine 1363 shows a compositional bias: acidic residues. Over residues arginine 1434–glutamate 1445 the composition is skewed to low complexity. Polar residues-rich tracts occupy residues threonine 1460–glutamine 1472 and glutamate 1489–glutamate 1501. Over residues alanine 1726–glutamine 1736 the composition is skewed to gly residues. 2 stretches are compositionally biased toward basic and acidic residues: residues leucine 1752–glutamate 1762 and alanine 1769–asparagine 1778. Tandem repeats lie at residues glutamate 1836 to valine 1851, glutamate 1852 to alanine 1867, and glutamate 1875 to valine 1890. 2 stretches are compositionally biased toward acidic residues: residues glutamate 1836–proline 1909 and glutamate 1920–glutamine 1948. A 25 X 16 AA approximate tandem repeats of [ED]-[AT]-[PQ]-[ED]-[AVT]-E-[GKE]-[ED]-[AMT]-Q-[EPK]-[EAT]-[TSELP]-[EG]-[EGSQDI]-[AVIE] region spans residues glutamate 1836 to glutamate 2244. The 2-4; approximate repeat unit spans residues glutamate 1891–alanine 1906. Residues glutamate 1907–serine 1921 form a 2-5 repeat. One copy of the 2-6; approximate repeat lies at glutamate 1923–alanine 1938. Residues glutamate 1934 to glutamine 2017 adopt a coiled-coil conformation. A 2-7 repeat occupies glutamate 1939–threonine 1954. Low complexity predominate over residues glutamate 1949–serine 1958. The 2-8; approximate repeat unit spans residues glutamine 1955–alanine 1970. Acidic residues-rich tracts occupy residues glutamate 1959–glycine 2022, alanine 2048–glutamate 2075, glutamate 2083–glycine 2108, and glutamate 2117–threonine 2245. The 2-9; approximate repeat unit spans residues glutamine 1971–valine 1984. 2 tandem repeats follow at residues glutamate 1985 to valine 2000 and glutamate 2001 to alanine 2016. The 2-12; approximate repeat unit spans residues glutamine 2017–glycine 2031. A 2-13d repeat occupies glutamate 2033 to alanine 2048. The stretch at glycine 2054–glutamate 2081 forms a coiled coil. One copy of the 2-14 repeat lies at glutamate 2056–valine 2071. A 2-15; approximate repeat occupies glutamine 2072–valine 2085. 10 tandem repeats follow at residues aspartate 2086–valine 2101, glutamate 2102–isoleucine 2116, glutamate 2117–isoleucine 2132, glutamate 2133–valine 2148, glutamate 2149–isoleucine 2164, glutamate 2165–valine 2180, glutamate 2181–isoleucine 2196, glutamate 2197–valine 2212, glutamate 2213–valine 2228, and glutamate 2229–glutamate 2244. The segment covering proline 2292–asparagine 2308 has biased composition (polar residues). The span at lysine 2312–aspartate 2327 shows a compositional bias: basic and acidic residues.

Interacts with RP1; has a synergistic effect with RP1 in photoreceptor differentiation. Retinal-specific; expressed in photoreceptor.

It localises to the cytoplasm. Its subcellular location is the cytoskeleton. The protein localises to the cilium axoneme. It is found in the cell projection. The protein resides in the cilium. It localises to the photoreceptor outer segment. Functionally, required for the differentiation of photoreceptor cells. Plays a role in the organization of outer segment of rod and cone photoreceptors. This is Retinitis pigmentosa 1-like 1 protein (RP1L1) from Homo sapiens (Human).